The following is a 174-amino-acid chain: N-terminal acetyltransferase B complex catalytic subunit NAA20 (174 aa).

The region spanning 2-151 is the N-acetyltransferase domain; the sequence is TTIRRFSCND…DGLDMRKALS (150 aa).

This sequence belongs to the acetyltransferase family. ARD1 subfamily.

It catalyses the reaction N-terminal L-methionyl-L-asparaginyl-[protein] + acetyl-CoA = N-terminal N(alpha)-acetyl-L-methionyl-L-asparaginyl-[protein] + CoA + H(+). The catalysed reaction is N-terminal L-methionyl-L-glutaminyl-[protein] + acetyl-CoA = N-terminal N(alpha)-acetyl-L-methionyl-L-glutaminyl-[protein] + CoA + H(+). It carries out the reaction N-terminal L-methionyl-L-aspartyl-[protein] + acetyl-CoA = N-terminal N(alpha)-acetyl-L-methionyl-L-aspartyl-[protein] + CoA + H(+). The enzyme catalyses N-terminal L-methionyl-L-glutamyl-[protein] + acetyl-CoA = N-terminal N(alpha)-acetyl-L-methionyl-L-glutamyl-[protein] + CoA + H(+). Functionally, catalytic subunit of the NatB N-alpha-acetyltransferase complex. Involved in plant immunity through the regulation of SNC1 stability. In Arabidopsis thaliana (Mouse-ear cress), this protein is N-terminal acetyltransferase B complex catalytic subunit NAA20.